The primary structure comprises 424 residues: Adenylosuccinate synthetase (424 aa).

GTP contacts are provided by residues 12 to 18 (GDEGKGK) and 40 to 42 (GHT). The active-site Proton acceptor is Asp13. Mg(2+) is bound by residues Asp13 and Gly40. IMP is bound by residues 13–16 (DEGK), 38–41 (NAGH), Thr130, Arg144, Asn220, Thr235, and Arg299. His41 functions as the Proton donor in the catalytic mechanism. 295-301 (VTTGRRR) is a substrate binding site. GTP is bound by residues Arg301, 327–329 (KLD), and 412–414 (GTG).

The protein belongs to the adenylosuccinate synthetase family. As to quaternary structure, homodimer. Mg(2+) serves as cofactor.

It is found in the cytoplasm. The enzyme catalyses IMP + L-aspartate + GTP = N(6)-(1,2-dicarboxyethyl)-AMP + GDP + phosphate + 2 H(+). It participates in purine metabolism; AMP biosynthesis via de novo pathway; AMP from IMP: step 1/2. Its function is as follows. Plays an important role in the de novo pathway and in the salvage pathway of purine nucleotide biosynthesis. Catalyzes the first committed step in the biosynthesis of AMP from IMP. This is Adenylosuccinate synthetase from Aspergillus fumigatus (strain CBS 144.89 / FGSC A1163 / CEA10) (Neosartorya fumigata).